The sequence spans 428 residues: MSKTHLTEQKFSDFALHPLVVEALENKGFQYCTPIQALALPLTLSGRDVAGQAQTGTGKTLAFLASTFHYLLSHPAEEGRQTNQPRALIMAPTRELAVQIHSDAESLSQVTGLKLGLAYGGDGYDKQLKVLESGVDILIGTTGRLIDYAKQNYINLGAIQVVVLDEADRMYDLGFIKDIRWLFRRMPSVDKRLNMLFSATLSYRVRELAFEQMNNAEYVEVEPLQKTGHRIKEELFYPSNEEKMRLLQTLIEEEWPDRCIIFANTKHRCEEIWGHLAADGHRVGLLTGDVAQKKRLRILEDFTKGDLDILVATDVAARGLHIPLVTHVFNYDLPDDCEDYVHRIGRTGRAGESGHSISLACEEYALNLPAIETYTGHSIPVSKYNSDALLTDLPAPKRLARTRTGNGPRRNSAPRRSGAPRNNRKRPG.

Positions 9-37 (QKFSDFALHPLVVEALENKGFQYCTPIQA) match the Q motif motif. In terms of domain architecture, Helicase ATP-binding spans 40 to 219 (LPLTLSGRDV…FEQMNNAEYV (180 aa)). Residue 53 to 60 (AQTGTGKT) coordinates ATP. A DEAD box motif is present at residues 165–168 (DEAD). The region spanning 245 to 390 (RLLQTLIEEE…VSKYNSDALL (146 aa)) is the Helicase C-terminal domain. Residues 394 to 428 (PAPKRLARTRTGNGPRRNSAPRRSGAPRNNRKRPG) form a disordered region.

It belongs to the DEAD box helicase family. RhlB subfamily. As to quaternary structure, component of the RNA degradosome, which is a multiprotein complex involved in RNA processing and mRNA degradation.

Its subcellular location is the cytoplasm. The catalysed reaction is ATP + H2O = ADP + phosphate + H(+). Functionally, DEAD-box RNA helicase involved in RNA degradation. Has RNA-dependent ATPase activity and unwinds double-stranded RNA. The sequence is that of ATP-dependent RNA helicase RhlB from Yersinia pseudotuberculosis serotype O:1b (strain IP 31758).